The following is a 270-amino-acid chain: Protein-ADP-ribose hydrolase (270 aa).

In terms of domain architecture, Macro spans 73–267 (VSVKDCQKTN…LYDTYLQKEN (195 aa)). ADP-D-ribose-binding residues include Asp92, Ile93, and Asn106. Zn(2+)-binding residues include Cys112, His117, and Cys119. The ADP-D-ribose site is built by Cys119, Ile120, Asp121, Ser212, Thr213, Gly214, Glu215, and Phe216.

It belongs to the MacroD-type family. Zn-Macro subfamily. It depends on Zn(2+) as a cofactor.

The enzyme catalyses 4-O-(ADP-D-ribosyl)-L-aspartyl-[protein] + H2O = L-aspartyl-[protein] + ADP-D-ribose + H(+). In terms of biological role, ADP-ribosylhydrolase that specifically reverses the SirTM-mediated mono-ADP-ribosylation at an asparatate residue of GcvH-L, by releasing ADP-ribose from the target protein. May play a role in the regulation of the response to host-induced oxidative stress. In Streptococcus pyogenes serotype M6 (strain ATCC BAA-946 / MGAS10394), this protein is Protein-ADP-ribose hydrolase.